A 432-amino-acid chain; its full sequence is MNIIVVGLSHKTAPVDFREKLSIPKVRIGEAIRELCNYPHIEEVAILSTCNRLEIYLLTSDTYQGIREATQFLADSSDLSLPELRQHLFILLHQDAVMHLMRVTAGLDSLIIGEGQILSQVKQCYQLGQQYQGIGPVLNNIFKQAISAGKRVRTETQISTGAVSISSAAVELAQIKKQDLRTANITILGAGKMSRLLVQHLLSKRVKDINIVNRSVERAKLLVDQFKEANINIYNLSELKTILQNSDIVFTGTSSQEPIITPELINDCDNLPSELMLFDIAVPRNVDPNVSQFDNIKVFNVDDLKVVVSQNQQTRRKMAKAAEILLEEELSAFNIWWGSLEAIPTINKLREKAEIIRVKELEKAISRLGNEFVSDHQEIVESLTRGIVNKILHDPMVQLRAQQDIEIRGRALKILQTLFNLDTIKNGMSPTL.

Residues 49 to 52 (TCNR), S109, 114 to 116 (EGQ), and Q120 contribute to the substrate site. The active-site Nucleophile is C50. 189–194 (GAGKMS) contacts NADP(+).

Belongs to the glutamyl-tRNA reductase family. In terms of assembly, homodimer.

The protein localises to the plastid. The protein resides in the cyanelle. The catalysed reaction is (S)-4-amino-5-oxopentanoate + tRNA(Glu) + NADP(+) = L-glutamyl-tRNA(Glu) + NADPH + H(+). Its pathway is porphyrin-containing compound metabolism; protoporphyrin-IX biosynthesis; 5-aminolevulinate from L-glutamyl-tRNA(Glu): step 1/2. The protein operates within porphyrin-containing compound metabolism; chlorophyll biosynthesis. Functionally, catalyzes the NADPH-dependent reduction of glutamyl-tRNA(Glu) to glutamate 1-semialdehyde (GSA). This chain is Glutamyl-tRNA reductase, found in Cyanophora paradoxa.